A 138-amino-acid polypeptide reads, in one-letter code: Odorant-binding protein 22 (138 aa).

An N-terminal signal peptide occupies residues 1 to 16 (MKVFIAVFALIAVAAA). Arginine 30 is a binding site for (5Z,8Z,11Z,14Z)-eicosatetraenoate. (9Z)-hexadecenoate is bound by residues arginine 30 and tyrosine 61. (9Z,12Z)-octadecadienoate is bound by residues arginine 30 and tyrosine 61. Intrachain disulfides connect cysteine 33-cysteine 64, cysteine 60-cysteine 113, and cysteine 103-cysteine 122. N-linked (GlcNAc...) asparagine glycosylation is present at asparagine 127.

Belongs to the PBP/GOBP family. Monomer in solution. As to expression, high-level expression in female mouth parts, particularly in the proboscis (at protein level). Moderate-level expression in female antenna (at protein level). Expressed in testis but not in the accessory gland or ejaculatory duct (at protein level). Expressed in spermathecae (at protein level). Female salivary gland. Female chemosensory organs: antenna, palp and proboscis. Not detected in midgut.

It is found in the secreted. Functionally, involved in modulation of blood-feeding behavior and capacity in female mosquitoes. Required for normal oviposition. Required for normal fecundity and fertility of female and male mosquitoes. Required for normal expression of VGA1 gene, which encodes the egg yolk protein vitellogenin-A1. Involved in regulation of spermatozoa development. Required for normal female longevity when mosquitoes are maintained on regular sugar meal. Binds long chain fatty acids. (Microbial infection) Facilitates shedding of dengue virus type 2 particles into mosquito saliva. Does not affect dengue virus type 2 replication or infection prevalence in midgut and salivary glands at 14 days after blood feeding. Its function is as follows. (Microbial infection) Facilitates shedding of Zika virus particles into mosquito saliva. Does not affect Zika virus replication or infection prevalence in midgut and salivary glands at 14 days after blood feeding. The protein is Odorant-binding protein 22 of Aedes aegypti (Yellowfever mosquito).